The chain runs to 391 residues: Calcium-binding and spermatid-specific protein 1 (391 aa).

Disordered stretches follow at residues 1–23 (MAEDGSPKIYSRPPRDNSKTPTE), 90–110 (PEKEITTPTETPNSKPKGSIT), and 152–221 (KEVV…KEVT). The span at 90 to 101 (PEKEITTPTETP) shows a compositional bias: low complexity. 2 positions are modified to phosphoserine: Ser253 and Ser269. Residues 271-299 (EKAKDNVEDPLNDEESTDGANDWMEKETA) are disordered. The segment covering 278-287 (EDPLNDEEST) has biased composition (acidic residues). Phosphoserine occurs at positions 314, 347, 357, 372, and 376. Residues 330 to 351 (EESHVNTTDLPENETTESVTNV) form a disordered region.

In terms of tissue distribution, detected only in testis. Expressed from stages X to VIII of the seminiferous epithelial cycle. Expressed from step 13 to step 16 of spermatid development (at protein level).

Its subcellular location is the cytoplasm. It localises to the mitochondrion inner membrane. The protein localises to the cell projection. It is found in the cilium. The protein resides in the flagellum. Its subcellular location is the cytoplasmic vesicle. It localises to the secretory vesicle. The protein localises to the acrosome. Its function is as follows. Calcium-binding protein. Essential for maintaining the structural integrity of the sperm flagella. This is Calcium-binding and spermatid-specific protein 1 (Cabs1) from Mus musculus (Mouse).